Reading from the N-terminus, the 98-residue chain is NADH-ubiquinone oxidoreductase chain 4L (98 aa).

3 helical membrane passes run 1-21 (MSLT…GLLM), 29-49 (SLLC…ITIL), and 61-81 (IILL…LVMV).

It belongs to the complex I subunit 4L family. Core subunit of respiratory chain NADH dehydrogenase (Complex I) which is composed of 45 different subunits.

The protein resides in the mitochondrion inner membrane. The catalysed reaction is a ubiquinone + NADH + 5 H(+)(in) = a ubiquinol + NAD(+) + 4 H(+)(out). Its function is as follows. Core subunit of the mitochondrial membrane respiratory chain NADH dehydrogenase (Complex I) which catalyzes electron transfer from NADH through the respiratory chain, using ubiquinone as an electron acceptor. Part of the enzyme membrane arm which is embedded in the lipid bilayer and involved in proton translocation. The polypeptide is NADH-ubiquinone oxidoreductase chain 4L (MT-ND4L) (Ectophylla alba (White bat)).